The following is a 132-amino-acid chain: Intraflagellar transport protein 20 homolog (132 aa).

The interval 70-132 (MKAIGARNLL…EFIDQFIFQK (63 aa)) is IFT57-binding. A coiled-coil region spans residues 74–116 (GARNLLKSIAKQREAQQQQLQALIAEKKTQLERYRVEYEALCK).

As to quaternary structure, component of the IFT complex B, at least composed of IFT20, IFT22, IFT25, IFT27, IFT46, IFT52, TRAF3IP1/IFT54, IFT57, IFT74, IFT80, IFT81, and IFT88. Interacts directly with IFT57 and KIF3B/Kinesin II subunit. Interacts with IFT88. Interacts with CEP83. Interacts with SPEF2 (via C-terminus). Interacts with CBL and CBLB. Interacts with TRIP11. Interacts with TTC21A. Interacts with SPATA1. Interacts with USH1G. Interacts with CCDC146. Interacts with CEP78; regulating IFT20 stability and localization. In terms of tissue distribution, expressed predominantly in the testis (at protein level). Expressed in kidney and retina. Expression is up-regulated during spermiogenesis.

It localises to the golgi apparatus. It is found in the cis-Golgi network. Its subcellular location is the cytoplasm. The protein localises to the cytoskeleton. The protein resides in the microtubule organizing center. It localises to the centrosome. It is found in the centriole. Its subcellular location is the cilium basal body. The protein localises to the cell projection. The protein resides in the cilium. It localises to the cytoplasmic vesicle. It is found in the secretory vesicle. Its subcellular location is the acrosome. Functionally, part of intraflagellar transport (IFT) particles involved in ciliary process assembly. May play a role in the trafficking of ciliary membrane proteins from the Golgi complex to the cilium. Regulates the ciliary platelet-derived growth factor receptor-alpha (PDGFRA) signaling pathway. Required for protein stability of E3 ubiquitin ligases CBL and CBLB that mediate ubiquitination and internalization of PDGFRA for proper feedback inhibition of PDGFRA signaling. Essential for male fertility. Plays an important role in spermatogenesis, particularly spermiogenesis, when germ cells form flagella. May play a role in the transport of flagellar proteins ODF2 and SPAG16 to build sperm flagella and in the removal of redundant sperm cytoplasm. Also involved in autophagy since it is required for trafficking of ATG16L and the expansion of the autophagic compartment. The polypeptide is Intraflagellar transport protein 20 homolog (Ift20) (Mus musculus (Mouse)).